We begin with the raw amino-acid sequence, 217 residues long: Cytochrome c biogenesis ATP-binding export protein CcmA (217 aa).

Residues 6 to 215 (FSAKNLACVR…HLDQFAVAEE (210 aa)) enclose the ABC transporter domain. Residue 38–45 (GPNGSGKS) participates in ATP binding.

Belongs to the ABC transporter superfamily. CcmA exporter (TC 3.A.1.107) family. The complex is composed of two ATP-binding proteins (CcmA) and two transmembrane proteins (CcmB).

The protein resides in the cell inner membrane. It carries out the reaction heme b(in) + ATP + H2O = heme b(out) + ADP + phosphate + H(+). In terms of biological role, part of the ABC transporter complex CcmAB involved in the biogenesis of c-type cytochromes; once thought to export heme, this seems not to be the case, but its exact role is uncertain. Responsible for energy coupling to the transport system. This is Cytochrome c biogenesis ATP-binding export protein CcmA from Paramagnetospirillum magneticum (strain ATCC 700264 / AMB-1) (Magnetospirillum magneticum).